A 359-amino-acid chain; its full sequence is Transcription factor MafA (359 aa).

At S14 the chain carries Phosphoserine. Residue K32 forms a Glycyl lysine isopeptide (Lys-Gly) (interchain with G-Cter in SUMO2) linkage. Disordered stretches follow at residues 40–105 (RFCH…VGGA) and 172–226 (GGGA…AGHH). Residues 46–73 (PPGSLSSTPLSTPCSSVPSSPSFCAPSP) are compositionally biased toward low complexity. S49 is modified (phosphoserine). 2 positions are modified to phosphothreonine: T53 and T57. Residues S61 and S65 each carry the phosphoserine modification. Residues 74-84 (GTGGGAGGGGS) are compositionally biased toward gly residues. Residues 181 to 209 (GHHHGAHHTAHHHHSAHHHHHHHHHHGGS) show a composition bias toward basic residues. The segment covering 210–224 (GHHGGGAGHGGGGAG) has biased composition (gly residues). The tract at residues 260–285 (RLKQKRRTLKNRGYAQSCRFKRVQQR) is basic motif. In terms of domain architecture, bZIP spans 260 to 323 (RLKQKRRTLK…DLYKEKYEKL (64 aa)). Residues 288 to 309 (LESEKCQLQSQVEQLKLEVGRL) form a leucine-zipper region. Positions 322–359 (KLAGRGGPGGAGGAGFPREPSPAQAGPGAAKGAPDFFL) are disordered. Positions 325-336 (GRGGPGGAGGAG) are enriched in gly residues. The segment covering 343 to 359 (PAQAGPGAAKGAPDFFL) has biased composition (low complexity).

Belongs to the bZIP family. Maf subfamily. Forms homodimers. Interacts with NEUROD1 and PDX1. May interact with MAFB, FOS, JUN and PCAF. Post-translationally, ubiquitinated, leading to its degradation by the proteasome. Phosphorylated at tyrosines. In terms of tissue distribution, expressed in brain, lung, spleen, pancreas and kidney. In the pancreas, expressed in the insulin-producing beta-cells of the islets of Langerhans (at protein level). Also expressed in the eye.

The protein localises to the nucleus. Transcriptional factor that activates insulin gene expression. Acts synergistically with NEUROD1/BETA2 and PDX1. Binds the insulin enhancer C1/RIPE3b element. Binds to consensus TRE-type MARE 5'-TGCTGACTCAGCA-3' DNA sequence. This Mus musculus (Mouse) protein is Transcription factor MafA (Mafa).